Consider the following 722-residue polypeptide: Glycine--tRNA ligase beta subunit (722 aa).

This sequence belongs to the class-II aminoacyl-tRNA synthetase family. As to quaternary structure, tetramer of two alpha and two beta subunits.

It localises to the cytoplasm. It carries out the reaction tRNA(Gly) + glycine + ATP = glycyl-tRNA(Gly) + AMP + diphosphate. This is Glycine--tRNA ligase beta subunit (glyS) from Synechocystis sp. (strain ATCC 27184 / PCC 6803 / Kazusa).